A 140-amino-acid chain; its full sequence is uncharacterized protein (140 aa).

Helical transmembrane passes span 33–53 (LLYV…KYYF) and 59–79 (SLLF…FMGF). A compositionally biased stretch (basic and acidic residues) spans 89 to 104 (EAEPDYRKKQESKNQD). Residues 89–140 (EAEPDYRKKQESKNQDFLKSQSNEPLEYASSSAVELEKEKNTREGLTILESS) are disordered. Over residues 105-121 (FLKSQSNEPLEYASSSA) the composition is skewed to polar residues.

Its subcellular location is the membrane. This is an uncharacterized protein from Schizosaccharomyces pombe (strain 972 / ATCC 24843) (Fission yeast).